Consider the following 219-residue polypeptide: Probable GTP-binding protein EngB (219 aa).

In terms of domain architecture, EngB-type G spans 31-205; sequence VGVEIAFAGR…LSILNEWCHP (175 aa). GTP is bound by residues 39 to 46, 66 to 70, 84 to 87, 151 to 154, and 184 to 186; these read GRSNAGKS, GRTQL, DLPG, TKSD, and FSA. Residues Ser46 and Thr68 each coordinate Mg(2+).

It belongs to the TRAFAC class TrmE-Era-EngA-EngB-Septin-like GTPase superfamily. EngB GTPase family. It depends on Mg(2+) as a cofactor.

Necessary for normal cell division and for the maintenance of normal septation. The chain is Probable GTP-binding protein EngB from Shewanella sp. (strain ANA-3).